We begin with the raw amino-acid sequence, 504 residues long: ATP synthase subunit alpha 2 (504 aa).

169 to 176 (GDRQTGKT) is a binding site for ATP.

This sequence belongs to the ATPase alpha/beta chains family. As to quaternary structure, F-type ATPases have 2 components, CF(1) - the catalytic core - and CF(0) - the membrane proton channel. CF(1) has five subunits: alpha(3), beta(3), gamma(1), delta(1), epsilon(1). CF(0) has three main subunits: a(1), b(2) and c(9-12). The alpha and beta chains form an alternating ring which encloses part of the gamma chain. CF(1) is attached to CF(0) by a central stalk formed by the gamma and epsilon chains, while a peripheral stalk is formed by the delta and b chains.

The protein localises to the cell membrane. It carries out the reaction ATP + H2O + 4 H(+)(in) = ADP + phosphate + 5 H(+)(out). In terms of biological role, produces ATP from ADP in the presence of a proton gradient across the membrane. The alpha chain is a regulatory subunit. In Listeria monocytogenes serotype 4b (strain F2365), this protein is ATP synthase subunit alpha 2.